The sequence spans 1135 residues: WASH complex subunit 4 (1135 aa).

At Ala-2 the chain carries N-acetylalanine.

This sequence belongs to the SWIP family. Probable component of the WASH complex.

The polypeptide is WASH complex subunit 4 (Dictyostelium discoideum (Social amoeba)).